The following is a 211-amino-acid chain: Large ribosomal subunit protein bL9 (211 aa).

The segment at 183–211 (AAASEDEELAETAGVAPAEPSEEDDSAKA) is disordered. Acidic residues predominate over residues 202–211 (PSEEDDSAKA).

This sequence belongs to the bacterial ribosomal protein bL9 family.

Its function is as follows. Binds to the 23S rRNA. This Roseobacter denitrificans (strain ATCC 33942 / OCh 114) (Erythrobacter sp. (strain OCh 114)) protein is Large ribosomal subunit protein bL9.